Reading from the N-terminus, the 92-residue chain is Protamine-2 (92 aa).

Residues 1–76 (MVRCRVRSPS…RRACRHRRHR (76 aa)) are disordered. Positions 7-20 (RSPSESPQQGSGQQ) are enriched in low complexity. A phosphoserine mark is found at Ser-8 and Ser-10. The segment covering 21–36 (RENERQDQDQELRPED) has biased composition (basic and acidic residues). Over residues 42-76 (RTHRGRYHYRHRSHTRRRRSCRRRRRRACRHRRHR) the composition is skewed to basic residues.

It belongs to the protamine P2 family. Interacts with TDRP. Proteolytic processing into mature chains is required for histone eviction during spermatogenesis. Transition proteins (TNP1 and TNP2) are required for processing. As to expression, testis.

The protein localises to the nucleus. It is found in the chromosome. In terms of biological role, protamines substitute for histones in the chromatin of sperm during the haploid phase of spermatogenesis. They compact sperm DNA into a highly condensed, stable and inactive complex. The sequence is that of Protamine-2 (PRM2) from Sus scrofa (Pig).